We begin with the raw amino-acid sequence, 780 residues long: Probable trehalase (780 aa).

The tract at residues 1–48 (MVDFLPKVTEINPPSEGNDGEDNIKPLSSGSEQRPLKEEGQQGGRRHH) is disordered. Ser-52 and Ser-53 each carry phosphoserine. Residue Thr-88 is modified to Phosphothreonine. Residue Ser-112 is modified to Phosphoserine. Substrate contacts are provided by residues Arg-331, 338 to 339 (WD), Asn-375, Arg-384, 384 to 386 (RSQ), and Gly-505. Active-site proton donor/acceptor residues include Asp-507 and Glu-703.

Belongs to the glycosyl hydrolase 37 family.

It catalyses the reaction alpha,alpha-trehalose + H2O = alpha-D-glucose + beta-D-glucose. This is Probable trehalase (NTH2) from Saccharomyces cerevisiae (strain ATCC 204508 / S288c) (Baker's yeast).